The primary structure comprises 355 residues: Small ribosomal subunit protein uS2 (355 aa).

Belongs to the universal ribosomal protein uS2 family.

This is Small ribosomal subunit protein uS2 from Methylobacterium radiotolerans (strain ATCC 27329 / DSM 1819 / JCM 2831 / NBRC 15690 / NCIMB 10815 / 0-1).